A 326-amino-acid polypeptide reads, in one-letter code: Tryptophan--tRNA ligase (326 aa).

ATP-binding positions include 11–13 (QPT) and 19–20 (GN). A 'HIGH' region motif is present at residues 12 to 20 (PTGQIHLGN). D135 contributes to the L-tryptophan binding site. Residues 147–149 (GED), V186, and 195–199 (KMSKS) each bind ATP. Positions 195-199 (KMSKS) match the 'KMSKS' region motif.

This sequence belongs to the class-I aminoacyl-tRNA synthetase family. In terms of assembly, homodimer.

It localises to the cytoplasm. The catalysed reaction is tRNA(Trp) + L-tryptophan + ATP = L-tryptophyl-tRNA(Trp) + AMP + diphosphate + H(+). Catalyzes the attachment of tryptophan to tRNA(Trp). This Helicobacter pylori (strain ATCC 700392 / 26695) (Campylobacter pylori) protein is Tryptophan--tRNA ligase.